A 193-amino-acid polypeptide reads, in one-letter code: Protein TEX261 (193 aa).

5 helical membrane passes run 1–21, 39–59, 67–87, 94–114, and 122–142; these read MVGVTLANVLPVCLALLPPPA, SRIIKYMIWFSTAVLIGLYVF, IGVGLFTNLVYFGLLQTFPFI, FILSCGLVVVNHYLAFQFFAE, and VLAYFTFCLWIIPFAFFVSLS.

Belongs to the SVP26 family.

It is found in the membrane. This Bos taurus (Bovine) protein is Protein TEX261 (TEX261).